We begin with the raw amino-acid sequence, 182 residues long: Adenine phosphoribosyltransferase (182 aa).

The protein belongs to the purine/pyrimidine phosphoribosyltransferase family. In terms of assembly, homodimer.

It is found in the cytoplasm. The catalysed reaction is AMP + diphosphate = 5-phospho-alpha-D-ribose 1-diphosphate + adenine. Its pathway is purine metabolism; AMP biosynthesis via salvage pathway; AMP from adenine: step 1/1. In terms of biological role, catalyzes a salvage reaction resulting in the formation of AMP, that is energically less costly than de novo synthesis. This chain is Adenine phosphoribosyltransferase, found in Campylobacter hominis (strain ATCC BAA-381 / DSM 21671 / CCUG 45161 / LMG 19568 / NCTC 13146 / CH001A).